The sequence spans 135 residues: Small ribosomal subunit protein uS9 (135 aa).

The segment covering 108 to 118 has biased composition (basic and acidic residues); sequence VGDPRRTEPHK. The disordered stretch occupies residues 108–135; sequence VGDPRRTEPHKPNRSTKGPRAKRQKSYR. The segment covering 119-135 has biased composition (basic residues); the sequence is PNRSTKGPRAKRQKSYR.

The protein belongs to the universal ribosomal protein uS9 family.

The sequence is that of Small ribosomal subunit protein uS9 (rps9) from Pyrococcus abyssi (strain GE5 / Orsay).